Here is a 372-residue protein sequence, read N- to C-terminus: N-methyl-L-tryptophan oxidase (372 aa).

4–34 (DLIIIGSGSVGAAAGYYATRAGLNVLMTDAH) serves as a coordination point for FAD. Residue C308 is modified to S-8alpha-FAD cysteine.

This sequence belongs to the MSOX/MTOX family. MTOX subfamily. As to quaternary structure, monomer. FAD serves as cofactor.

The catalysed reaction is N(alpha)-methyl-L-tryptophan + O2 + H2O = L-tryptophan + formaldehyde + H2O2. Functionally, catalyzes the oxidative demethylation of N-methyl-L-tryptophan. In Escherichia coli (strain SMS-3-5 / SECEC), this protein is N-methyl-L-tryptophan oxidase.